The sequence spans 100 residues: MRSILYAVLAFAVLARSSAVAAFPIPDESRPLSKTSPDTGATRSLRVEAQEVIQSGRGDGYGGFWKNVFPSTNKIIKKPDIKISKLIAAAKKAKAKMTKS.

Residues 1 to 22 form the signal peptide; it reads MRSILYAVLAFAVLARSSAVAA. The short motif at 43–57 is the RxLR-dEER element; it reads RSLRVEAQEVIQSGR. The Calmodulin-binding motif motif lies at 78–82; it reads KPDIK.

This sequence belongs to the RxLR effector family. In terms of assembly, interacts with the host calmodulin.

Its subcellular location is the secreted. The protein localises to the host nucleus. It is found in the host cytoplasm. In terms of biological role, effector that suppresses flg22-induced post-translational MAP kinase activation both tomato and Arabidopsis. The perception of highly conserved pathogen- or microbe-associated molecular patterns (PAMPs/MAMPs), such as flg22, triggers converging signaling pathways recruiting MAP kinase cascades and inducing transcriptional re-programming, yielding a generic antimicrobial response. Associates with calmodulin to interfere with plant defense-associated calcium signaling in hosts. The sequence is that of RxLR effector protein SFI8 from Phytophthora infestans (strain T30-4) (Potato late blight agent).